A 183-amino-acid chain; its full sequence is ATP synthase subunit b, chloroplastic (183 aa).

Residues 27–49 (LATNPINLSVVLGVLIFFGKGVL) form a helical membrane-spanning segment.

This sequence belongs to the ATPase B chain family. In terms of assembly, F-type ATPases have 2 components, F(1) - the catalytic core - and F(0) - the membrane proton channel. F(1) has five subunits: alpha(3), beta(3), gamma(1), delta(1), epsilon(1). F(0) has four main subunits: a(1), b(1), b'(1) and c(10-14). The alpha and beta chains form an alternating ring which encloses part of the gamma chain. F(1) is attached to F(0) by a central stalk formed by the gamma and epsilon chains, while a peripheral stalk is formed by the delta, b and b' chains.

The protein resides in the plastid. It is found in the chloroplast thylakoid membrane. Its function is as follows. F(1)F(0) ATP synthase produces ATP from ADP in the presence of a proton or sodium gradient. F-type ATPases consist of two structural domains, F(1) containing the extramembraneous catalytic core and F(0) containing the membrane proton channel, linked together by a central stalk and a peripheral stalk. During catalysis, ATP synthesis in the catalytic domain of F(1) is coupled via a rotary mechanism of the central stalk subunits to proton translocation. In terms of biological role, component of the F(0) channel, it forms part of the peripheral stalk, linking F(1) to F(0). This chain is ATP synthase subunit b, chloroplastic, found in Ranunculus macranthus (Large buttercup).